Here is a 272-residue protein sequence, read N- to C-terminus: MTHHDAQPSTDAEQSSNATLPHILICNDDGIEADGIHALATAMKKVGRVTVVAPAEPHSAMSHAMTLGRPLRIKEYQKNGRFFGYTVSGTPVDCIKVALSHILTEKPDILVSGINYGSNTATNTLYSGTVAAALEGAIQGITSLAFSLATYENADFTYATKFARKLTKKVLAEGLPADTILSVNIPNVPESQIAGVIIAEQGSSRWEEQAIERHDMFGNPYYWLSGSLQLMDHSMKKDEFAVRHNYVAVTPISCDLTNYAALAGLEKWKLKK.

A divalent metal cation-binding residues include D28, D29, S59, and N115.

It belongs to the SurE nucleotidase family. A divalent metal cation serves as cofactor.

It localises to the cytoplasm. The enzyme catalyses a ribonucleoside 5'-phosphate + H2O = a ribonucleoside + phosphate. Its function is as follows. Nucleotidase that shows phosphatase activity on nucleoside 5'-monophosphates. The protein is 5'-nucleotidase SurE of Chlorobium chlorochromatii (strain CaD3).